Reading from the N-terminus, the 660-residue chain is MSAPESSISPVPPPGSSSGGGKKLDSLPKEDLVKFAKKQVAHVAEMKKNQTALMEKLKAKMSELEQVKKDAENLKLINEKLTTESAKKVENNPTECTECLSKSGALIELEKEVFEWKEKATRADMISLELRDLESKVDQLNRALRDKTEALIKAQEVITENDLEVNNMKKEKNNTKSSIEKLTEENTRLTKALQDEKIKSADFEARLRSAECRIVELSDQQGNEKLGLARKMAESENRGRILEEAVDVLKSENEKLLAKNEEFSAKLVSSEKEFAEFKKKSHFVLEKKGKQEDETRKAIEKLEKSKVTITELEQQADQTRQEHFKTVEDLASSRDKAERLEKTLKVLKSELTESEKAHTTAIDELQSSSSKLIQRLDEELRLMRSSRDTAEQKIKDIEIAKEKVDHLLQNERQRSENENGSLKSKLSSATKQIHSLEKELQELRNDFETRRIQSNQHQQQKAIAAVVPQPIQLPEHPIPPLHYQRPAVAPSDSVSCYDEPTQPDRSLEDVLYGDLGDEYRVESDELSEEKFKVILDQLENLKKTNHHVAELLSDAETANGRLTTQNSLLKDEIRRLEREEKREAELSNEKNMEYLKNVFVQFLKPESVPAERDQLVIVLQRVLHLSPKEVEILKAASAHMATAQAGSWSSYFSGWSGAAT.

Positions 1–28 are disordered; it reads MSAPESSISPVPPPGSSSGGGKKLDSLP. 3 coiled-coil regions span residues 30–92, 115–464, and 517–596; these read EDLV…VENN, EWKE…KAIA, and DEYR…EYLK. Positions 585-636 constitute a GRIP domain; the sequence is ELSNEKNMEYLKNVFVQFLKPESVPAERDQLVIVLQRVLHLSPKEVEILKAA.

This is GRIP and coiled-coil domain-containing protein 2 from Caenorhabditis elegans.